The sequence spans 60 residues: Protein P7 (60 aa).

The chain crosses the membrane as a helical span at residues 28–48; sequence FIGVTLIGMFISYYLYALISI.

Its subcellular location is the host membrane. This chain is Protein P7, found in Vitis vinifera (Grape).